The following is a 248-amino-acid chain: Small ribosomal subunit protein uS3 (248 aa).

The region spanning 39–108 (IRKLVDKKLS…TVAVNVAEIP (70 aa)) is the KH type-2 domain. The segment at 214–248 (ETIARPQRRNDERRPEGGDRANRRRPTARRRAGGE) is disordered. A compositionally biased stretch (basic and acidic residues) spans 221–234 (RRNDERRPEGGDRA). Basic residues predominate over residues 235–248 (NRRRPTARRRAGGE).

Belongs to the universal ribosomal protein uS3 family. As to quaternary structure, part of the 30S ribosomal subunit. Forms a tight complex with proteins S10 and S14.

Its function is as follows. Binds the lower part of the 30S subunit head. Binds mRNA in the 70S ribosome, positioning it for translation. The protein is Small ribosomal subunit protein uS3 of Deinococcus deserti (strain DSM 17065 / CIP 109153 / LMG 22923 / VCD115).